Consider the following 159-residue polypeptide: Putative pre-16S rRNA nuclease (159 aa).

Belongs to the YqgF nuclease family.

It is found in the cytoplasm. Could be a nuclease involved in processing of the 5'-end of pre-16S rRNA. This Thermobifida fusca (strain YX) protein is Putative pre-16S rRNA nuclease.